A 1064-amino-acid polypeptide reads, in one-letter code: Valine--tRNA ligase, mitochondrial (1064 aa).

The N-terminal 26 residues, 1–26 (MPHLPLASFRPPFWGLRHSRGLPRFH), are a transit peptide targeting the mitochondrion. Positions 25 to 65 (FHSVSTQSEPHGSPISRRNREAKQKRLREKQATLETDIAGE) are disordered. The span at 42–56 (RNREAKQKRLREKQA) shows a compositional bias: basic and acidic residues. The 'HIGH' region signature appears at 146-156 (PNVTGSLHIGH). The 'KMSKS' region motif lies at 659–663 (KMSKS). K662 serves as a coordination point for ATP.

It belongs to the class-I aminoacyl-tRNA synthetase family.

It is found in the mitochondrion. It catalyses the reaction tRNA(Val) + L-valine + ATP = L-valyl-tRNA(Val) + AMP + diphosphate. Functionally, catalyzes the attachment of valine to tRNA(Val) in a two-step reaction: valine is first activated by ATP to form Val-AMP and then transferred to the acceptor end of tRNA(Val). This chain is Valine--tRNA ligase, mitochondrial (VARS2), found in Macaca mulatta (Rhesus macaque).